We begin with the raw amino-acid sequence, 388 residues long: tRNA(Ile)-lysidine synthase (388 aa).

An ATP-binding site is contributed by 51-56 (SGGRDS).

The protein belongs to the tRNA(Ile)-lysidine synthase family.

It is found in the cytoplasm. The enzyme catalyses cytidine(34) in tRNA(Ile2) + L-lysine + ATP = lysidine(34) in tRNA(Ile2) + AMP + diphosphate + H(+). In terms of biological role, ligates lysine onto the cytidine present at position 34 of the AUA codon-specific tRNA(Ile) that contains the anticodon CAU, in an ATP-dependent manner. Cytidine is converted to lysidine, thus changing the amino acid specificity of the tRNA from methionine to isoleucine. The protein is tRNA(Ile)-lysidine synthase of Bifidobacterium longum subsp. infantis (strain ATCC 15697 / DSM 20088 / JCM 1222 / NCTC 11817 / S12).